Consider the following 742-residue polypeptide: Synaptic vesicle glycoprotein 2A (742 aa).

Residues 1 to 57 are interaction with SYT1; sequence MEEGFRDRAAFIRGAKDIAKEVKKHAAKKVVKGLDRVQDEYSRRSYSRFEEEEDDDD. The Cytoplasmic portion of the chain corresponds to 1–169; the sequence is MEEGFRDRAA…GHGRFQWTLY (169 aa). Over residues 40-49 the composition is skewed to basic and acidic residues; sequence EYSRRSYSRF. The segment at 40-145 is disordered; that stretch reads EYSRRSYSRF…RGEAQRRKDR (106 aa). Phosphoserine is present on residues Ser80 and Ser81. Thr84 is modified (phosphothreonine). The segment covering 122–137 has biased composition (gly residues); it reads VRGGLSDGEGPPGGRG. At Ser127 the chain carries Phosphoserine. The helical transmembrane segment at 170-190 threads the bilayer; sequence FVLGLALMADGVEVFVVGFVL. Residues 191–205 lie on the Extracellular side of the membrane; sequence PSAEKDMCLSDSNKG. A helical membrane pass occupies residues 206-226; sequence MLGLIVYLGMMVGAFLWGGLA. The Cytoplasmic segment spans residues 227–233; it reads DRLGRRQ. The helical transmembrane segment at 234–254 threads the bilayer; that stretch reads CLLISLSVNSVFAFFSSFVQG. Residues 255–262 are Extracellular-facing; sequence YGTFLFCR. The chain crosses the membrane as a helical span at residues 263–283; the sequence is LLSGVGIGGSIPIVFSYFSEF. Residues 284-294 are Cytoplasmic-facing; that stretch reads LAQEKRGEHLS. The helical transmembrane segment at 295 to 315 threads the bilayer; the sequence is WLCMFWMIGGVYAAAMAWAII. The Extracellular portion of the chain corresponds to 316-334; the sequence is PHYGWSFQMGSAYQFHSWR. Residues 335-355 traverse the membrane as a helical segment; that stretch reads VFVLVCAFPSVFAIGALTTQP. Residues 356–447 are Cytoplasmic-facing; that stretch reads ESPRFFLENG…CFSPEYRRIT (92 aa). Residue Ser393 is modified to Phosphoserine. A helical transmembrane segment spans residues 448–468; sequence LMMMGVWFTMSFSYYGLTVWF. At 469–598 the chain is on the extracellular side; sequence PDMIRHLQAV…GTGEGAYMVY (130 aa). A Phosphotyrosine modification is found at Tyr480. Asn498 and Asn548 each carry an N-linked (GlcNAc...) asparagine glycan. An N-linked (GlcNAc...) asparagine; alternate glycan is attached at Asn573. N-linked (HexNAc...) asparagine; alternate glycosylation is present at Asn573. The chain crosses the membrane as a helical span at residues 599–619; sequence FVSFLGTLAVLPGNIVSALLM. Topologically, residues 620–626 are cytoplasmic; it reads DKIGRLR. The helical transmembrane segment at 627 to 647 threads the bilayer; that stretch reads MLAGSSVLSCVSCFFLSFGNS. At 648–651 the chain is on the extracellular side; sequence ESAM. A helical membrane pass occupies residues 652–672; it reads IALLCLFGGVSIASWNALDVL. The Cytoplasmic segment spans residues 673 to 685; the sequence is TVELYPSDKRTTA. The chain crosses the membrane as a helical span at residues 686–708; that stretch reads FGFLNALCKLAAVLGISIFTSFV. At 709–712 the chain is on the extracellular side; that stretch reads GITK. Residues 713–731 traverse the membrane as a helical segment; sequence AAPILFASAALALGSSLAL. Topologically, residues 732–742 are cytoplasmic; it reads KLPETRGQVLQ.

This sequence belongs to the major facilitator superfamily. As to quaternary structure, interacts with SYT1/synaptotagmin-1 in a calcium-dependent manner. Binds the adapter protein complex AP-2. In terms of assembly, (Microbial infection) Interacts with C.botulinum neurotoxin type A1 and type A2 (BoNT/A, botA). Interaction is improved by glycosylation of SV2. (Microbial infection) Copurifies with C.botulinum neurotoxin type B (BoNT/B, botB) and synaptotagmin 1 (SYT1). Interaction does not require glycosylation of SV2 or SYT1 proteins. Another group finds only copurification with SYT1 and SYT2. As to quaternary structure, (Microbial infection) Interacts with C.botulinum neurotoxin type E (BoNT/E). Interaction requires glycosylation of SV2 proteins. In terms of assembly, (Microbial infection) Copurifies with C.botulinum neurotoxin type F (BoNT/F) and synaptotagmin 1 (SYT2). Another group finds only copurification with BoNT/F. Interaction requires SV2 glycosylation. In terms of processing, phosphorylation by CK1 of the N-terminal cytoplasmic domain regulates interaction with SYT1. N-glycosylated, on at least 3 residues. Widely expressed throughout the brain (at protein level). Expressed by neural and endocrine cells of brain and spinal cord.

It localises to the presynapse. The protein localises to the cytoplasmic vesicle. The protein resides in the secretory vesicle. Its subcellular location is the synaptic vesicle membrane. Its function is as follows. Plays a role in the control of regulated secretion in neural and endocrine cells, enhancing selectively low-frequency neurotransmission. Positively regulates vesicle fusion by maintaining the readily releasable pool of secretory vesicles. In terms of biological role, (Microbial infection) Receptor for C.botulinum neurotoxin type A (BoNT/A, botA); the toxin binds via extracellular loop 4. Restores uptake of BoNT/A in mouse cells that are deleted for SV2 receptor. Glycosylation of Asn-573 is not essential for receptor activity, but enhances uptake. Also serves as a receptor for the closely related C.botulinum neurotoxin type A2; glycosylation is not essential but enhances the interaction. Functionally, possible receptor for C.botulinum neurotoxin type D (BoNT/D, botD); BoNT/D does not bind to extracellular loop 4 as do BoNT/A and BoNT/E, nor to loop 1 or loop 3. Another group does not find a convincing interaction with SV2. (Microbial infection) Receptor for C.botulinum neurotoxin type E (BoNT/E); the toxin probably binds via extracellular loop 4 and requires glycosylation of Asn-573. Restores uptake of BoNT/E in mouse cells that are deleted for SV2 receptor. Its function is as follows. (Microbial infection) Receptor for C.botulinum neurotoxin type F (BoNT/F). Binding requires glycosylation of Asn-573. This Rattus norvegicus (Rat) protein is Synaptic vesicle glycoprotein 2A (Sv2a).